The following is a 293-amino-acid chain: MAMNKSVGLFSSASLAVDYVDSLLPENPLQEPFKNAWVYMLDNYTKFQIATWGSLIVHETIYFLFSLPGFLFQFIPFMRKYKIQKDKPETFEGQWKCLKGILFNHFFIQLPLICGTYYFTEFFNIPYDWERMPRWYFTLARCLGCAVIEDTWHYFLHRLLHHKRIYKYIHKVHHEFQAPFGIEAEYAHPLETLILGTGFFIGIVLLCDHVILLWAWVTMRLLETIDVHSGYDIPLNPLNYIPFYTGARHHDFHHMNFIGNYASTFTWWDRIFGTDVQYHAYTEKMKKLGKKSE.

A run of 2 helical transmembrane segments spans residues 55–75 and 100–120; these read LIVHETIYFLFSLPGFLFQFI and GILFNHFFIQLPLICGTYYFT. Positions 144-274 constitute a Fatty acid hydroxylase domain; sequence GCAVIEDTWH…FTWWDRIFGT (131 aa). The Histidine box-1 motif lies at 157–161; it reads HRLLH. The Histidine box-2 motif lies at 170–174; that stretch reads HKVHH. Residues 199–219 traverse the membrane as a helical segment; sequence FFIGIVLLCDHVILLWAWVTM. The short motif at 249 to 255 is the Histidine box-3 element; it reads HHDFHHM.

Belongs to the sterol desaturase family. Fe cation serves as cofactor. In terms of processing, ubiquitinated by MARCHF6, leading to proteasomal degradation.

The protein resides in the endoplasmic reticulum membrane. It carries out the reaction 4,4-dimethyl-5alpha-cholest-7-en-3beta-ol + 6 Fe(II)-[cytochrome b5] + 3 O2 + 5 H(+) = 4alpha-carboxy-4beta-methyl-5alpha-cholest-7-ene-3beta-ol + 6 Fe(III)-[cytochrome b5] + 4 H2O. It catalyses the reaction 4,4-dimethyl-5alpha-cholesta-8,24-dien-3beta-ol + 6 Fe(II)-[cytochrome b5] + 3 O2 + 5 H(+) = 4beta-methylzymosterol-4alpha-carboxylate + 6 Fe(III)-[cytochrome b5] + 4 H2O. The enzyme catalyses 4alpha-methylzymosterol + 6 Fe(II)-[cytochrome b5] + 3 O2 + 5 H(+) = 4alpha-carboxyzymosterol + 6 Fe(III)-[cytochrome b5] + 4 H2O. The catalysed reaction is 4alpha-methyl-5alpha-cholest-7-en-3beta-ol + 6 Fe(II)-[cytochrome b5] + 3 O2 + 5 H(+) = 4alpha-carboxy-5alpha-cholest-7-en-3beta-ol + 6 Fe(III)-[cytochrome b5] + 4 H2O. It carries out the reaction 4,4-dimethyl-5alpha-cholest-8-en-3beta-ol + 6 Fe(II)-[cytochrome b5] + 3 O2 + 5 H(+) = 4alpha-carboxy-4beta-methyl-5alpha-cholest-8-en-3beta-ol + 6 Fe(III)-[cytochrome b5] + 4 H2O. It catalyses the reaction 4alpha-methyl-5alpha-cholest-8-en-3beta-ol + 6 Fe(II)-[cytochrome b5] + 3 O2 + 5 H(+) = 4alpha-carboxy-5alpha-cholest-8-ene-3beta-ol + 6 Fe(III)-[cytochrome b5] + 4 H2O. It functions in the pathway steroid biosynthesis; zymosterol biosynthesis; zymosterol from lanosterol: step 3/6. It participates in steroid biosynthesis; cholesterol biosynthesis. Catalyzes the three-step monooxygenation required for the demethylation of 4,4-dimethyl and 4alpha-methylsterols, which can be subsequently metabolized to cholesterol. The sequence is that of Methylsterol monooxygenase 1 (Msmo1) from Rattus norvegicus (Rat).